A 133-amino-acid polypeptide reads, in one-letter code: Profilin (133 aa).

The protein belongs to the profilin family.

Functionally, more likely to influence phosphoinositide metabolism than actin assembly. In Camelus, this protein is Profilin.